Consider the following 161-residue polypeptide: Tropomyosin (161 aa).

Positions Met1–Leu161 form a coiled coil. The segment covering Glu40–Ala52 has biased composition (basic and acidic residues). Disordered stretches follow at residues Glu40 to Lys65 and Glu107 to Glu134.

Homodimer.

It is found in the cytoplasm. The protein localises to the cytoskeleton. In terms of biological role, forms part of the F-actin contractile ring during cytokinesis. The chain is Tropomyosin (cdc8) from Schizosaccharomyces pombe (strain 972 / ATCC 24843) (Fission yeast).